We begin with the raw amino-acid sequence, 220 residues long: GTP cyclohydrolase 1 (220 aa).

Residues Cys110, His113, and Cys181 each contribute to the Zn(2+) site.

The protein belongs to the GTP cyclohydrolase I family. In terms of assembly, toroid-shaped homodecamer, composed of two pentamers of five dimers.

The catalysed reaction is GTP + H2O = 7,8-dihydroneopterin 3'-triphosphate + formate + H(+). It participates in cofactor biosynthesis; 7,8-dihydroneopterin triphosphate biosynthesis; 7,8-dihydroneopterin triphosphate from GTP: step 1/1. This is GTP cyclohydrolase 1 from Baumannia cicadellinicola subsp. Homalodisca coagulata.